Consider the following 82-residue polypeptide: Small ribosomal subunit protein bS16 (82 aa).

Belongs to the bacterial ribosomal protein bS16 family.

This Psychromonas ingrahamii (strain DSM 17664 / CCUG 51855 / 37) protein is Small ribosomal subunit protein bS16.